The primary structure comprises 205 residues: NADH-quinone oxidoreductase subunit I (205 aa).

2 consecutive 4Fe-4S ferredoxin-type domains span residues 75-104 and 114-143; these read RLLE…METS and HEYT…HGGR. [4Fe-4S] cluster is bound by residues Cys84, Cys87, Cys90, Cys94, Cys123, Cys126, Cys129, and Cys133.

It belongs to the complex I 23 kDa subunit family. As to quaternary structure, NDH-1 is composed of 14 different subunits. Subunits NuoA, H, J, K, L, M, N constitute the membrane sector of the complex. The cofactor is [4Fe-4S] cluster.

The protein localises to the cell inner membrane. The catalysed reaction is a quinone + NADH + 5 H(+)(in) = a quinol + NAD(+) + 4 H(+)(out). Functionally, NDH-1 shuttles electrons from NADH, via FMN and iron-sulfur (Fe-S) centers, to quinones in the respiratory chain. The immediate electron acceptor for the enzyme in this species is believed to be ubiquinone. Couples the redox reaction to proton translocation (for every two electrons transferred, four hydrogen ions are translocated across the cytoplasmic membrane), and thus conserves the redox energy in a proton gradient. The polypeptide is NADH-quinone oxidoreductase subunit I (Wolinella succinogenes (strain ATCC 29543 / DSM 1740 / CCUG 13145 / JCM 31913 / LMG 7466 / NCTC 11488 / FDC 602W) (Vibrio succinogenes)).